The primary structure comprises 122 residues: MIRPQTILNVADNSGAKKLMCIRVLGGSYKQSANIGDIIIAVVKQATPNMPLKKSDKVRAVVVRTAQGVQRENGTFIRFDDNAAVVINKDDNPRGTRVFGPVARELRDRKFTKIVSLAPEVL.

It belongs to the universal ribosomal protein uL14 family. Part of the 50S ribosomal subunit.

It is found in the plastid. It localises to the chloroplast. Its function is as follows. Binds to 23S rRNA. This chain is Large ribosomal subunit protein uL14c, found in Tupiella akineta (Green alga).